A 1368-amino-acid polypeptide reads, in one-letter code: DNA-directed RNA polymerase subunit beta (1368 aa).

Belongs to the RNA polymerase beta chain family. The RNAP catalytic core consists of 2 alpha, 1 beta, 1 beta' and 1 omega subunit. When a sigma factor is associated with the core the holoenzyme is formed, which can initiate transcription.

The enzyme catalyses RNA(n) + a ribonucleoside 5'-triphosphate = RNA(n+1) + diphosphate. Functionally, DNA-dependent RNA polymerase catalyzes the transcription of DNA into RNA using the four ribonucleoside triphosphates as substrates. The polypeptide is DNA-directed RNA polymerase subunit beta (Burkholderia mallei (strain SAVP1)).